The chain runs to 229 residues: Putative N-acetylmannosamine-6-phosphate 2-epimerase (229 aa).

Belongs to the NanE family.

The catalysed reaction is an N-acyl-D-glucosamine 6-phosphate = an N-acyl-D-mannosamine 6-phosphate. It participates in amino-sugar metabolism; N-acetylneuraminate degradation; D-fructose 6-phosphate from N-acetylneuraminate: step 3/5. In terms of biological role, converts N-acetylmannosamine-6-phosphate (ManNAc-6-P) to N-acetylglucosamine-6-phosphate (GlcNAc-6-P). In Escherichia coli O8 (strain IAI1), this protein is Putative N-acetylmannosamine-6-phosphate 2-epimerase.